The primary structure comprises 259 residues: Aliphatic sulfonates import ATP-binding protein SsuB 2 (259 aa).

Residues 17–238 enclose the ABC transporter domain; it reads LDILGLWKGF…VRSSQAFTSI (222 aa). 49 to 56 contributes to the ATP binding site; it reads GRSGCGKS.

It belongs to the ABC transporter superfamily. Aliphatic sulfonates importer (TC 3.A.1.17.2) family. The complex is composed of two ATP-binding proteins (SsuB), two transmembrane proteins (SsuC) and a solute-binding protein (SsuA).

The protein resides in the cell inner membrane. It carries out the reaction ATP + H2O + aliphatic sulfonate-[sulfonate-binding protein]Side 1 = ADP + phosphate + aliphatic sulfonateSide 2 + [sulfonate-binding protein]Side 1.. Its function is as follows. Part of the ABC transporter complex SsuABC involved in aliphatic sulfonates import. Responsible for energy coupling to the transport system. In Agrobacterium fabrum (strain C58 / ATCC 33970) (Agrobacterium tumefaciens (strain C58)), this protein is Aliphatic sulfonates import ATP-binding protein SsuB 2.